Here is a 550-residue protein sequence, read N- to C-terminus: MAVALNIADLAEHAIDAVPDRVALICGDEQLTYAQLEEKANRLAHHLIDQGVGKGDKVGLYCRNRIEIVIAMLGIIKAGAILINVNFRYVEGELKYLFDNSDMVALVHERQYADRVANVLPDTPNVKTILVVQDGSDKDYRRYGGVEFYSAIADSSPERDFAELQRERSADDIYILYTGGTTGFPKGVMWRHEDIYRVLFGGTDFATGEFIKDEYDLAKAAAANPPMIRYPIPPMIHGATQSATWMSIFSGQTTVLAPEFDADQVWRTISDRKVNLLFFTGDAMARPLLDALMKDNDYDLSSLFLLASTAALFSPSIKEKLLELLPNRVITDSIGSSETGFGGTSIVGAGQATTGGPRVTIDHRTVVLDEEGNEVKPGSGVRGIIAKKGNIPVGYYKDEKKTAETFKTINGVRYAIPGDYAMVEADGTVTMLGRGSVSINSGGEKIYPEEVEAALKGHPDVFDALVVGVPDPRYGQHVAAVVAPRPGSRPSLAELDGFVRSAIAGYKVPRSLWFVDEVKRSPAGKPDYRWAKEQTEARPADDVHAAHVSA.

Residues 178 to 186 (TGGTTGFPK), Asp419, Arg434, and Lys525 contribute to the ATP site. A disordered region spans residues 525-550 (KPDYRWAKEQTEARPADDVHAAHVSA).

Belongs to the ATP-dependent AMP-binding enzyme family.

It catalyses the reaction a medium-chain fatty acid + ATP + CoA = a medium-chain fatty acyl-CoA + AMP + diphosphate. The enzyme catalyses a long-chain fatty acid + ATP + CoA = a long-chain fatty acyl-CoA + AMP + diphosphate. It carries out the reaction (25S)-3-oxocholest-4-en-26-oate + ATP + CoA = (25S)-3-oxocholest-4-en-26-oyl-CoA + AMP + diphosphate. It participates in lipid metabolism; fatty acid biosynthesis. The protein operates within steroid metabolism; cholesterol metabolism. In terms of biological role, catalyzes the activation of medium/long-chain fatty acids as acyl-coenzyme A (acyl-CoA), which are then transferred to the multifunctional polyketide synthase (PKS) type III for further chain extension. Also involved in the degradation of cholesterol via the degradation of the side chains of C-24 branched-chain sterols. Catalyzes the ATP-dependent CoA thioesterification of the sterol 3-oxocholest-4-en-26-oate to yield 3-oxocholest-4-en-26-oyl-CoA. The polypeptide is Medium/long-chain-fatty-acid--CoA/3-oxocholest-4-en-26-oate--CoA ligase (Mycobacterium marinum (strain ATCC BAA-535 / M)).